A 437-amino-acid polypeptide reads, in one-letter code: Phenylacetate-coenzyme A ligase (437 aa).

The protein belongs to the phenylacetyl-CoA ligase family. In terms of assembly, monomer.

The catalysed reaction is 2-phenylacetate + ATP + CoA = phenylacetyl-CoA + AMP + diphosphate. It functions in the pathway aromatic compound metabolism; phenylacetate degradation. Functionally, catalyzes the activation of phenylacetic acid (PA) to phenylacetyl-CoA (PA-CoA). The sequence is that of Phenylacetate-coenzyme A ligase (paaK) from Escherichia coli (strain K12).